Here is a 436-residue protein sequence, read N- to C-terminus: AMSH-like protease (436 aa).

Position 1 is an N-acetylmethionine (Met1). Phosphoserine occurs at positions 25 and 242. Residues 269–397 (VVLSRDLCHK…IFRLTNAGML (129 aa)) enclose the MPN domain. 7 residues coordinate Zn(2+): His347, His349, Asp360, His362, Cys402, His408, and His410. The short motif at 347 to 360 (HTHPTQTAFLSSVD) is the JAMM motif element.

This sequence belongs to the peptidase M67C family. Zn(2+) serves as cofactor. In terms of tissue distribution, ubiquitously expressed. Isoform 1 is widely expressed while isoform 2 is testis-specific.

Zinc metalloprotease that specifically cleaves 'Lys-63'-linked polyubiquitin chains. Acts as a positive regulator of the TORC1 signaling pathway by mediating 'Lys-63'-linked deubiquitination of SESN2, thereby inhibiting SESN2-interaction with the GATOR2 complex. Does not cleave 'Lys-48'-linked polyubiquitin chains. In Mus musculus (Mouse), this protein is AMSH-like protease (Stambpl1).